A 659-amino-acid polypeptide reads, in one-letter code: Exoribonuclease 2 (659 aa).

Positions 189 to 532 (RRDLTALHFV…NHRLIKACLA (344 aa)) constitute an RNB domain. An S1 motif domain is found at 577-659 (NPEFRAEVQD…ETRSLIGNLV (83 aa)).

The protein belongs to the RNR ribonuclease family. RNase II subfamily.

The protein localises to the cytoplasm. The catalysed reaction is Exonucleolytic cleavage in the 3'- to 5'-direction to yield nucleoside 5'-phosphates.. Its function is as follows. Involved in mRNA degradation. Hydrolyzes single-stranded polyribonucleotides processively in the 3' to 5' direction. This is Exoribonuclease 2 from Mannheimia succiniciproducens (strain KCTC 0769BP / MBEL55E).